We begin with the raw amino-acid sequence, 814 residues long: Coiled-coil and C2 domain-containing protein 1-like (814 aa).

The span at 1–11 (MFAKRKPEPAK) shows a compositional bias: basic and acidic residues. Disordered stretches follow at residues 1–136 (MFAK…TFLP) and 157–263 (EANA…RSRQ). Over residues 25 to 47 (IPDDFDPTSGYGDDDGGDSDLEA) the composition is skewed to acidic residues. Basic and acidic residues predominate over residues 73–85 (DLDKMIADSLRDV). 2 stretches are compositionally biased toward acidic residues: residues 86–100 (SDDD…DSDL) and 110–130 (LEEE…EEEP). The DM14 1 stretch occupies residues 143 to 201 (LGIIKQRLEIYKQAEANAKASGDSGKARRFGRGLKTLQDLHKQAAAGKTINVDDIPPEV). A compositionally biased stretch (low complexity) spans 205–230 (PAGDPSPAADESPAPSTPVSQPTRVA). The span at 231 to 254 (PAPPTPTSPPAATPPPAPATPPNP) shows a compositional bias: pro residues. DM14 stretches follow at residues 256–314 (VAQM…PPPP) and 358–416 (LEAL…PVPP). Residues 351-378 (AAAAESMLEALQRRLEKYKSVEAAAKAE) are a coiled coil. A compositionally biased stretch (pro residues) spans 414-425 (VPPGFGPLPSTE). The interval 414 to 486 (VPPGFGPLPS…LTTRVTGNHQ (73 aa)) is disordered. Residues 426 to 462 (PAPAATPSLPTSPTSPPATASTSAGGTPSGSSATTPT) show a composition bias toward low complexity. Over residues 475–486 (TELTTRVTGNHQ) the composition is skewed to polar residues. The DM14 4 stretch occupies residues 495–553 (MKLLLERQKEFKVAAIEAKKAGEIDQAKEYLKIYKGFDSLLNAASSGLPVDLSTLPVPP). The C2 domain maps to 633–772 (RKGQPLPKFH…ETKCDIHDTY (140 aa)).

It belongs to the CC2D1 family. Interacts (via DM14 domains 1 and 3) with shrb; the interaction is direct and blocks access to the surface involved in shrb polymerization. This interaction may be required for the ESCRT-III complex role in multivesicular body formation.

Its subcellular location is the cytoplasm. The protein resides in the cytosol. It is found in the apicolateral cell membrane. The protein localises to the cell cortex. It localises to the endosome. Its function is as follows. Phosphatidyl inositol monophosphate binding protein involved in endosomal protein sorting through regulation of the endosomal sorting required for transport (ESCRT) pathway. Required for full activity of the ESCRT-III complex core component shrb/shrub, probably by preventing its inappropriate polymerisation. Required, but not essential, for the efficient generation of intraluminal vesicles (ILVs) in multivesicular bodies (MVBs). Involved in a late stage of the endosomal pathway targeting transmembrane proteins of the plasma membrane for lysosomal degradation. Plays a critical role in regulation of multiple signal transduction pathways, including the Notch and BMP/decapentaplegic (dpp) signaling pathways, through targeting of membrane bound receptors to multivesicular bodies, isolating them from the cytoplasm and targeting them for lysosomal degradation. Involved in targeting N/Notch for endosomal degradation, negatively regulating the Notch signaling pathway. Regulates Notch signaling in imaginal disk cells and follicle cells during oogenesis and multiple developmental processes, including development of wings, veins, legs, eyes and bristles. Restricts the activity of Notch to the dorsoventral (D/V) boundary of the wing imaginal disk. In external sensory organ development regulates Notch signaling during asymmetric cell division and differentiation of sensory organ precursor cells. May be involved in regulation of apoptosis and cell growth independent of Notch signaling. Involved in targeting tkv for endosomal degradation, negatively regulating the BMP/decapentaplegic (dpp) signaling pathway. Regulates the BMP/dpp signaling pathway in follicle cells during oogenesis, but not in imaginal disk cells during wing development. May be involved in differentiation or morphogenesis of peripodial epithelial cells in the developing imaginal disk. Involved in abscission of germline cells during oogenesis. This Drosophila pseudoobscura pseudoobscura (Fruit fly) protein is Coiled-coil and C2 domain-containing protein 1-like.